Here is a 62-residue protein sequence, read N- to C-terminus: UPF0337 protein XCC0070 (62 aa).

The segment at 32–62 (LEGAAEKNIGKVQRKAGELADDVRDATKSTR) is disordered.

Belongs to the UPF0337 (CsbD) family.

This Xanthomonas campestris pv. campestris (strain ATCC 33913 / DSM 3586 / NCPPB 528 / LMG 568 / P 25) protein is UPF0337 protein XCC0070.